A 201-amino-acid chain; its full sequence is Small ribosomal subunit protein uS4c (201 aa).

One can recognise an S4 RNA-binding domain in the interval 91 to 153 (MRLDNIVFRL…NASKKIVETN (63 aa)).

Belongs to the universal ribosomal protein uS4 family. Part of the 30S ribosomal subunit. Contacts protein S5. The interaction surface between S4 and S5 is involved in control of translational fidelity.

The protein localises to the plastid. The protein resides in the cyanelle. One of the primary rRNA binding proteins, it binds directly to 16S rRNA where it nucleates assembly of the body of the 30S subunit. Its function is as follows. With S5 and S12 plays an important role in translational accuracy. The polypeptide is Small ribosomal subunit protein uS4c (rps4) (Cyanophora paradoxa).